The following is an 83-amino-acid chain: Putative beta-neurotoxin RjAa12f (83 aa).

The signal sequence occupies residues 1-18; sequence MKILIFIIASFMLIGVEC. The LCN-type CS-alpha/beta domain occupies 19–82; the sequence is KEGYPMGRDG…VWDSSTNKCG (64 aa). 4 disulfides stabilise this stretch: cysteine 29/cysteine 81, cysteine 33/cysteine 55, cysteine 40/cysteine 62, and cysteine 44/cysteine 64. A propeptide is located at residue glycine 83.

Post-translationally, contains 4 disulfide bonds. As to expression, expressed by the venom gland.

It localises to the secreted. Beta toxins bind voltage-independently at site-4 of sodium channels (Nav) and shift the voltage of activation toward more negative potentials thereby affecting sodium channel activation and promoting spontaneous and repetitive firing. This toxin is lethal to insects (A.domestica). It is not toxic to mice and does not affect mammal F11 sodium channels. The protein is Putative beta-neurotoxin RjAa12f of Rhopalurus junceus (Caribbean blue scorpion).